The sequence spans 340 residues: Alpha-1,3-galactosyltransferase 2 (340 aa).

The Cytoplasmic segment spans residues 1–12 (MALKEGLRAWKR). A helical; Signal-anchor for type II membrane protein transmembrane segment spans residues 13 to 32 (IFWRQILLTLGLLGLFLYGL). Over 33–340 (PKFRHLEALI…APKGYRLLRN (308 aa)) the chain is Lumenal. Residues N58 and N100 are each glycosylated (N-linked (GlcNAc...) asparagine). Mn(2+) contacts are provided by D199 and D201.

The protein belongs to the glycosyltransferase 6 family. The cofactor is Mn(2+). In terms of tissue distribution, expressed in thymus and monocyte derived dendritic cells.

It localises to the golgi apparatus. The protein localises to the golgi stack membrane. It carries out the reaction a beta-D-galactosyl-(1-&gt;4)-N-acetyl-beta-D-glucosaminyl derivative + UDP-alpha-D-galactose = an alpha-D-galactosyl-(1-&gt;3)-beta-D-galactosyl-(1-&gt;4)-N-acetyl-beta-D-glucosaminyl derivative + UDP + H(+). It catalyses the reaction a beta-D-Gal-(1-&gt;4)-beta-D-Glc-(1&lt;-&gt;1)-Cer(d18:1(4E)) + UDP-alpha-D-galactose = an isogloboside iGb3Cer (d18:1(4E)) + UDP + H(+). The enzyme catalyses a globoside Gb3Cer + UDP-alpha-D-galactose = a globoside GalGb3Cer + UDP + H(+). Synthesizes the galactose-alpha(1,3)-galactose group on the glycosphingolipid isoglobotrihexosylceramide or isogloboside 3 (iGb3) by catalyzing the transfer of galactose from UDP-Galactose to its acceptor molecule Gal-beta-1,4-Glc-ceramide. Can also catalyze the addition of galactose to iGb3 itself to form polygalactose structures. In Homo sapiens (Human), this protein is Alpha-1,3-galactosyltransferase 2.